We begin with the raw amino-acid sequence, 255 residues long: Small ribosomal subunit protein eS1 (255 aa).

The residue at position 2 (alanine 2) is an N-acetylalanine; partial.

This sequence belongs to the eukaryotic ribosomal protein eS1 family. As to quaternary structure, component of the small ribosomal subunit. Mature ribosomes consist of a small (40S) and a large (60S) subunit. The 40S subunit contains about 33 different proteins and 1 molecule of RNA (18S). The 60S subunit contains about 49 different proteins and 3 molecules of RNA (25S, 5.8S and 5S).

Its subcellular location is the cytoplasm. The sequence is that of Small ribosomal subunit protein eS1 from Candida glabrata (strain ATCC 2001 / BCRC 20586 / JCM 3761 / NBRC 0622 / NRRL Y-65 / CBS 138) (Yeast).